Consider the following 433-residue polypeptide: Glutamate-1-semialdehyde 2,1-aminomutase (433 aa).

Lys273 carries the N6-(pyridoxal phosphate)lysine modification.

The protein belongs to the class-III pyridoxal-phosphate-dependent aminotransferase family. HemL subfamily. In terms of assembly, homodimer. The cofactor is pyridoxal 5'-phosphate.

The protein resides in the cytoplasm. It carries out the reaction (S)-4-amino-5-oxopentanoate = 5-aminolevulinate. It functions in the pathway porphyrin-containing compound metabolism; protoporphyrin-IX biosynthesis; 5-aminolevulinate from L-glutamyl-tRNA(Glu): step 2/2. The protein operates within porphyrin-containing compound metabolism; chlorophyll biosynthesis. The polypeptide is Glutamate-1-semialdehyde 2,1-aminomutase (Gloeothece citriformis (strain PCC 7424) (Cyanothece sp. (strain PCC 7424))).